The primary structure comprises 596 residues: Bromodomain-containing protein 9 (596 aa).

A compositionally biased stretch (basic residues) spans 1-10 (MGKKHKKHKS). 2 disordered regions span residues 1-31 (MGKK…QYYV) and 49-119 (EVTE…SEGE). The span at 61–73 (SFYEDRSDHERER) shows a compositional bias: basic and acidic residues. The segment covering 74–84 (HKEKKKKKKKK) has biased composition (basic residues). Residues 85 to 98 (SEKEKDKYLDEDER) are compositionally biased toward basic and acidic residues. Positions 99-109 (RRRKEEKKRKR) are enriched in basic residues. The Bromo domain maps to 148-252 (NESTPLQQLL…HTGFKMMSKQ (105 aa)). The histone H4K5ac H4K8ac and histone H4K5bu H4K8bu binding stretch occupies residues 226–228 (TYN). Residues 537–547 (DFHDVHNDRGG) show a composition bias toward basic and acidic residues. The tract at residues 537–596 (DFHDVHNDRGGSRPSSSSSVSNNSERDHHLGSPSRISVGEQQDIHDPYEFLQSPETENQN) is disordered. Over residues 548–559 (SRPSSSSSVSNN) the composition is skewed to low complexity.

Binds acetylated histones H3 and H4. Binds butyrylated histone H4.

It is found in the nucleus. Functionally, plays a role in chromatin remodeling and regulation of transcription. Acts as a chromatin reader that recognizes and binds acylated histones: binds histones that are acetylated and/or butyrylated. The protein is Bromodomain-containing protein 9 (brd9) of Xenopus tropicalis (Western clawed frog).